A 317-amino-acid polypeptide reads, in one-letter code: MTINDSAISEQGMCEEEQVARIAWFYYHDGLTQSEISDRLGLTRLKVSRLLEKGHQSGIIRVQINSRFEGCLEYETQLRRQFSLQHVRVIPGLADADVGGRLGIGAAHMLMSLLQPQQMLAIGFGEATMNTLQRLSGFISSQQIRLVTLSGGVGSYMTGIGQLNAACSVNIIPAPLRASSADIARTLKNENCVKDVLLAAQAADVAIVGIGAVSQQDDATIIRSGYISQGEQLMIGRKGAVGDILGYFFDAKGDVVTDIKIHNELIGLPLSSLKTIPVRVGVAGGENKAEAIAAAMKGGYINALVTDQDTAAAILRS.

Positions 33 to 56 (QSEISDRLGLTRLKVSRLLEKGHQ) form a DNA-binding region, H-T-H motif.

Belongs to the SorC transcriptional regulatory family.

It localises to the cytoplasm. Its activity is regulated as follows. Inactivated by phosphorylated autoinducer-2 (phospho-AI-2). Phospho-AI-2 acts by binding to LsrR, which is then unable to bind to the promoter regions, allowing the transcription of the target genes. Transcriptional regulator that represses the expression of the lsr operon in the absence of the quorum-sensing signaling molecule autoinducer 2 (AI-2). It also represses the expression of the lsrRK operon. Acts by binding directly to the lsrA and lsrR promoter regions. In the presence of phosphorylated autoinducer-2 (phospho-AI-2), LsrR is inactivated, leading to the transcription of the genes. The protein is Transcriptional regulator LsrR (lsrR) of Escherichia coli O139:H28 (strain E24377A / ETEC).